The following is a 615-amino-acid chain: Chaperone protein HscA homolog (615 aa).

The protein belongs to the heat shock protein 70 family.

Functionally, chaperone involved in the maturation of iron-sulfur cluster-containing proteins. Has a low intrinsic ATPase activity which is markedly stimulated by HscB. The chain is Chaperone protein HscA homolog from Aeromonas hydrophila subsp. hydrophila (strain ATCC 7966 / DSM 30187 / BCRC 13018 / CCUG 14551 / JCM 1027 / KCTC 2358 / NCIMB 9240 / NCTC 8049).